The sequence spans 510 residues: Glycerol kinase (510 aa).

An ADP-binding site is contributed by threonine 13. ATP-binding residues include threonine 13 and threonine 14. Threonine 13 lines the sn-glycerol 3-phosphate pocket. Residue arginine 17 coordinates ADP. Sn-glycerol 3-phosphate-binding residues include arginine 83, glutamate 84, tyrosine 135, and aspartate 255. Arginine 83, glutamate 84, tyrosine 135, aspartate 255, and glutamine 256 together coordinate glycerol. ADP is bound by residues threonine 277, glycine 321, glycine 421, and asparagine 425. Residues threonine 277, glycine 321, and glycine 421 each coordinate ATP.

This sequence belongs to the FGGY kinase family.

It catalyses the reaction glycerol + ATP = sn-glycerol 3-phosphate + ADP + H(+). It functions in the pathway polyol metabolism; glycerol degradation via glycerol kinase pathway; sn-glycerol 3-phosphate from glycerol: step 1/1. Functionally, key enzyme in the regulation of glycerol uptake and metabolism. Catalyzes the phosphorylation of glycerol to yield sn-glycerol 3-phosphate. The chain is Glycerol kinase from Haloquadratum walsbyi (strain DSM 16790 / HBSQ001).